The chain runs to 790 residues: Pre-mRNA-splicing factor cwf3 (790 aa).

HAT repeat units lie at residues 12–44 (DLINVDDEPFELELLRDPYSLKSWLRYIKTHEG), 45–77 (STLEKRVLLFERACSELPGSYKIWKSYLELRVA), 89–121 (EAFASVNDCFERSLILLHKMPVIWKLYLQFLMK), 123–157 (PNVTKIRCTFNSALRALPVTQHDDIWDMFTKYAED), 159–190 (GGLFCIHVYRRYIQVEPRAIENYIEILCKLGL), 193–228 (EAARQYEDILNRPVFLSAKRKSNYQIWLEFSELVVQ), 233–266 (TQNIDVEKVFRAGIKRFSDQAGKLWTYLAQYYIR), 268–303 (GDYEKARSTFYEGMNNIMTVRNFTIIFDAFVEFEEQ), 331–364 (KILDKRPLYINDVLLRQNINNVDEWLRRVKFLED), 368–402 (KVVQVYTDAIKNVNPKLAHGSLGKLFSEFARFYEN), 404–440 (DDLEQSRIIFEKATHVPYKTVNELAQVWIDWAEMELR), 457–492 (APRKSHISFFDESLSPQVRLHKSSKIWMYYLDLEES), 494–526 (GTIETTRKLYDRVFELKIATPQVVVNYANLLEE), 528–562 (AYFEDSFKIYERGVALFSYPVAFELWNLYLTKFVK), 567–601 (THMERTRDLFEQALEGCPPEFSKSIYLLYADFEEK), 639–673 (YGVLATRTVYEKAIESLSDSEVKDMCLRFAEMETK), and 675–709 (GEIDRARLIYIHGSQYCDPRVETDYWKAWQEFEIR). Positions 769-790 (LAGFVLSKSNPQETSKITGEEN) are disordered. Residues 775-790 (SKSNPQETSKITGEEN) show a composition bias toward polar residues.

The protein belongs to the crooked-neck family. In terms of assembly, belongs to the 40S cdc5-associated complex (or cwf complex), a spliceosome sub-complex reminiscent of a late-stage spliceosome composed of the U2, U5 and U6 snRNAs and at least brr2, cdc5, cwf2/prp3, cwf3/syf1, cwf4/syf3, cwf5/ecm2, spp42/cwf6, cwf7/spf27, cwf8, cwf9, cwf10, cwf11, cwf12, prp45/cwf13, cwf14, cwf15, cwf16, cwf17, cwf18, cwf19, cwf20, cwf21, cwf22, cwf23, cwf24, cwf25, cwf26, cyp7/cwf27, cwf28, cwf29/ist3, lea1, msl1, prp5/cwf1, prp10, prp12/sap130, prp17, prp22, sap61, sap62, sap114, sap145, slu7, smb1, smd1, smd3, smf1, smg1 and syf2.

It localises to the nucleus. Its function is as follows. Involved in pre-mRNA splicing and cell cycle progression. In Schizosaccharomyces pombe (strain 972 / ATCC 24843) (Fission yeast), this protein is Pre-mRNA-splicing factor cwf3 (cwf3).